The primary structure comprises 440 residues: Xylose isomerase (440 aa).

Active-site residues include His101 and Asp104. Residues Glu232, Glu268, His271, Asp296, Asp307, Asp309, and Asp339 each contribute to the Mg(2+) site.

This sequence belongs to the xylose isomerase family. Homotetramer. Requires Mg(2+) as cofactor.

It localises to the cytoplasm. It carries out the reaction alpha-D-xylose = alpha-D-xylulofuranose. In Enterobacter sp. (strain 638), this protein is Xylose isomerase.